Reading from the N-terminus, the 599-residue chain is Aspartate--tRNA(Asp/Asn) ligase (599 aa).

Glu174 contributes to the L-aspartate binding site. The tract at residues Gln198–Lys201 is aspartate. Arg220 contributes to the L-aspartate binding site. ATP-binding positions include Arg220–Glu222 and Gln229. L-aspartate is bound at residue His457. Glu491 contributes to the ATP binding site. Arg498 provides a ligand contact to L-aspartate. Gly543–Arg546 contacts ATP.

The protein belongs to the class-II aminoacyl-tRNA synthetase family. Type 1 subfamily. In terms of assembly, homodimer.

The protein localises to the cytoplasm. The catalysed reaction is tRNA(Asx) + L-aspartate + ATP = L-aspartyl-tRNA(Asx) + AMP + diphosphate. Its function is as follows. Aspartyl-tRNA synthetase with relaxed tRNA specificity since it is able to aspartylate not only its cognate tRNA(Asp) but also tRNA(Asn). Reaction proceeds in two steps: L-aspartate is first activated by ATP to form Asp-AMP and then transferred to the acceptor end of tRNA(Asp/Asn). This is Aspartate--tRNA(Asp/Asn) ligase from Paraburkholderia phytofirmans (strain DSM 17436 / LMG 22146 / PsJN) (Burkholderia phytofirmans).